Consider the following 231-residue polypeptide: Thiamine import ATP-binding protein ThiQ (231 aa).

Positions 2-230 (LHLDRLLIRQ…PPPALRAYLG (229 aa)) constitute an ABC transporter domain. Residue 32–39 (GPSGGGKS) participates in ATP binding.

Belongs to the ABC transporter superfamily. Thiamine importer (TC 3.A.1.19.1) family. The complex is composed of two ATP-binding proteins (ThiQ), two transmembrane proteins (ThiP) and a solute-binding protein (ThiB).

The protein localises to the cell inner membrane. The enzyme catalyses thiamine(out) + ATP + H2O = thiamine(in) + ADP + phosphate + H(+). Functionally, part of the ABC transporter complex ThiBPQ involved in thiamine import. Responsible for energy coupling to the transport system. The polypeptide is Thiamine import ATP-binding protein ThiQ (Cereibacter sphaeroides (strain ATCC 17023 / DSM 158 / JCM 6121 / CCUG 31486 / LMG 2827 / NBRC 12203 / NCIMB 8253 / ATH 2.4.1.) (Rhodobacter sphaeroides)).